The following is a 165-amino-acid chain: MPAKTTSARLTHLDDAGLPTMVDVSDKQVTARSATAESRVHFPAAVAAQLRANGLRSAKGGIVETAVIAGTMAVKRTHELIPFCHPLPIDGCRFEIDWAGAHVLQIVCTVRCVHRTGVEMEALTGASVAALTVYDMCKALSHSMRIGPTKLLSKRGGKRDIGAAR.

Residues 83–85 (FCH) and 120–121 (ME) contribute to the substrate site. The active site involves aspartate 135.

Belongs to the MoaC family. Homohexamer; trimer of dimers.

The catalysed reaction is (8S)-3',8-cyclo-7,8-dihydroguanosine 5'-triphosphate = cyclic pyranopterin phosphate + diphosphate. It functions in the pathway cofactor biosynthesis; molybdopterin biosynthesis. Catalyzes the conversion of (8S)-3',8-cyclo-7,8-dihydroguanosine 5'-triphosphate to cyclic pyranopterin monophosphate (cPMP). The chain is Cyclic pyranopterin monophosphate synthase from Xanthomonas campestris pv. campestris (strain B100).